A 466-amino-acid polypeptide reads, in one-letter code: Asparagine--tRNA ligase (466 aa).

It belongs to the class-II aminoacyl-tRNA synthetase family. Homodimer.

The protein resides in the cytoplasm. It carries out the reaction tRNA(Asn) + L-asparagine + ATP = L-asparaginyl-tRNA(Asn) + AMP + diphosphate + H(+). The protein is Asparagine--tRNA ligase of Vibrio vulnificus (strain YJ016).